The primary structure comprises 312 residues: UDP-N-acetylenolpyruvoylglucosamine reductase (312 aa).

An FAD-binding PCMH-type domain is found at 37 to 205 (VGGPADALVV…VCAEFALCPG (169 aa)). Arginine 185 is an active-site residue. Serine 234 (proton donor) is an active-site residue. The active site involves glutamate 304.

The protein belongs to the MurB family. FAD serves as cofactor.

The protein resides in the cytoplasm. The catalysed reaction is UDP-N-acetyl-alpha-D-muramate + NADP(+) = UDP-N-acetyl-3-O-(1-carboxyvinyl)-alpha-D-glucosamine + NADPH + H(+). The protein operates within cell wall biogenesis; peptidoglycan biosynthesis. Its function is as follows. Cell wall formation. This is UDP-N-acetylenolpyruvoylglucosamine reductase from Syntrophus aciditrophicus (strain SB).